The chain runs to 713 residues: Polyribonucleotide nucleotidyltransferase (713 aa).

Mg(2+) is bound by residues aspartate 493 and aspartate 499. Residues 560 to 619 (PRMITIKINPEKIRDVIGKGGSVIRALTEETGTTIDISDDGVVTIASTNSEGMAEAKKRI) enclose the KH domain. Residues 629–697 (GHVYEGTVLK…EKGRVRLSAK (69 aa)) form the S1 motif domain.

This sequence belongs to the polyribonucleotide nucleotidyltransferase family. Requires Mg(2+) as cofactor.

The protein localises to the cytoplasm. The catalysed reaction is RNA(n+1) + phosphate = RNA(n) + a ribonucleoside 5'-diphosphate. Functionally, involved in mRNA degradation. Catalyzes the phosphorolysis of single-stranded polyribonucleotides processively in the 3'- to 5'-direction. The sequence is that of Polyribonucleotide nucleotidyltransferase from Burkholderia mallei (strain NCTC 10247).